Here is a 732-residue protein sequence, read N- to C-terminus: MTEGTCLRRRGGPYKTEPATDLGRWRLNCERGRQTWTYLQDERAGREQTGLEAYALGLDTKNYFKDLPKAHTAFEGALNGMTFYVGLQAEDGHWTGDYGGPLFLLPGLLITCHVARIPLPAGYREEIVRYLRSVQLPDGGWGLHIEDKSTVFGTALNYVSLRILGVGPDDPDLVRARNILHKKGGAVAIPSWGKFWLAVLNVYSWEGLNTLFPEMWLFPDWAPAHPSTLWCHCRQVYLPMSYCYAVRLSAAEDPLVQSLRQELYVEDFASIDWLAQRNNVAPDELYTPHSWLLRVVYALLNLYEHHHSAHLRQRAVQKLYEHIVADDRFTKSISIGPISKTINMLVRWYVDGPASTAFQEHVSRIPDYLWMGLDGMKMQGTNGSQIWDTAFAIQALLEAGGHHRPEFSSCLQKAHEFLRLSQVPDNPPDYQKYYRQMRKGGFSFSTLDCGWIVSDCTAEALKAVLLLQEKCPHVTEHIPRERLCDAVAVLLNMRNPDGGFATYETKRGGHLLELLNPSEVFGDIMIDYTYVECTSAVMQALKYFHKRFPEHRAAEIRETLTQGLEFCRRQQRADGSWEGSWGVCFTYGTWFGLEAFACMGQTYRDGTACAEVSRACDFLLSRQMADGGWGEDFESCEERRYLQSAQSQIHNTCWAMMGLMAVRHPDIEAQERGVRCLLEKQLPNGDWPQENIAGVFNKSCAISYTSYRNIFPIWALGRFSQLYPERALAGHP.

N-acetylthreonine is present on Thr-2. 7 PFTB repeats span residues 77–121 (ALNG…PLPA), 124–165 (REEI…RILG), 424–468 (PDNP…LLLQ), 483–528 (LCDA…MIDY), 560–600 (LTQG…ACMG), 612–653 (VSRA…HNTC), and 670–712 (QERG…NIFP). The active-site Proton donor is the Asp-455.

It belongs to the terpene cyclase/mutase family. Monomer. In terms of tissue distribution, widely expressed. Expressed in the hair bulb, the outer root sheath and hair matrix of the hair follicle epithelium. Also detected in dermal papilla, epidermis, sweat glands, sebaceous glands, and blood vessels.

It is found in the endoplasmic reticulum membrane. The catalysed reaction is (S)-2,3-epoxysqualene = lanosterol. The protein operates within terpene metabolism; lanosterol biosynthesis; lanosterol from farnesyl diphosphate: step 3/3. Its function is as follows. Key enzyme in the cholesterol biosynthesis pathway. Catalyzes the cyclization of (S)-2,3 oxidosqualene to lanosterol, a reaction that forms the sterol nucleus. Through the production of lanosterol may regulate lens protein aggregation and increase transparency. The chain is Lanosterol synthase (LSS) from Homo sapiens (Human).